The following is a 459-amino-acid chain: tRNA modification GTPase MnmE (459 aa).

(6S)-5-formyl-5,6,7,8-tetrahydrofolate-binding residues include R22, E85, and R124. A TrmE-type G domain is found at 221–380 (GLSTVIVGKP…LEIQIRDLFF (160 aa)). N231 lines the K(+) pocket. Residues 231–236 (NVGKSS), 250–256 (TEVAGTT), and 275–278 (DTAG) contribute to the GTP site. S235 contributes to the Mg(2+) binding site. Positions 250, 252, and 255 each coordinate K(+). Mg(2+) is bound at residue T256. K459 contacts (6S)-5-formyl-5,6,7,8-tetrahydrofolate.

Belongs to the TRAFAC class TrmE-Era-EngA-EngB-Septin-like GTPase superfamily. TrmE GTPase family. As to quaternary structure, homodimer. Heterotetramer of two MnmE and two MnmG subunits. It depends on K(+) as a cofactor.

It is found in the cytoplasm. Functionally, exhibits a very high intrinsic GTPase hydrolysis rate. Involved in the addition of a carboxymethylaminomethyl (cmnm) group at the wobble position (U34) of certain tRNAs, forming tRNA-cmnm(5)s(2)U34. The sequence is that of tRNA modification GTPase MnmE from Staphylococcus aureus (strain bovine RF122 / ET3-1).